We begin with the raw amino-acid sequence, 220 residues long: Ribosomal RNA large subunit methyltransferase E (220 aa).

The S-adenosyl-L-methionine site is built by Gly60, Trp62, Asp92, Asp108, and Asp133. The Proton acceptor role is filled by Lys173. A disordered region spans residues 197–220; that stretch reads RKPKASRDKSSETFILGRQLKQPR.

Belongs to the class I-like SAM-binding methyltransferase superfamily. RNA methyltransferase RlmE family.

It localises to the cytoplasm. It carries out the reaction uridine(2552) in 23S rRNA + S-adenosyl-L-methionine = 2'-O-methyluridine(2552) in 23S rRNA + S-adenosyl-L-homocysteine + H(+). Functionally, specifically methylates the uridine in position 2552 of 23S rRNA at the 2'-O position of the ribose in the fully assembled 50S ribosomal subunit. The protein is Ribosomal RNA large subunit methyltransferase E of Burkholderia ambifaria (strain MC40-6).